The following is a 467-amino-acid chain: ATP synthase subunit beta (467 aa).

Position 150–157 (150–157) interacts with ATP; that stretch reads GGAGVGKT.

Belongs to the ATPase alpha/beta chains family. In terms of assembly, F-type ATPases have 2 components, CF(1) - the catalytic core - and CF(0) - the membrane proton channel. CF(1) has five subunits: alpha(3), beta(3), gamma(1), delta(1), epsilon(1). CF(0) has three main subunits: a(1), b(2) and c(9-12). The alpha and beta chains form an alternating ring which encloses part of the gamma chain. CF(1) is attached to CF(0) by a central stalk formed by the gamma and epsilon chains, while a peripheral stalk is formed by the delta and b chains.

The protein resides in the cell inner membrane. It catalyses the reaction ATP + H2O + 4 H(+)(in) = ADP + phosphate + 5 H(+)(out). Functionally, produces ATP from ADP in the presence of a proton gradient across the membrane. The catalytic sites are hosted primarily by the beta subunits. The chain is ATP synthase subunit beta from Vibrio vulnificus (strain YJ016).